Here is a 205-residue protein sequence, read N- to C-terminus: Urease accessory protein UreG (205 aa).

Residue 10–17 (GPVGAGKT) coordinates GTP.

It belongs to the SIMIBI class G3E GTPase family. UreG subfamily. As to quaternary structure, homodimer. UreD, UreF and UreG form a complex that acts as a GTP-hydrolysis-dependent molecular chaperone, activating the urease apoprotein by helping to assemble the nickel containing metallocenter of UreC. The UreE protein probably delivers the nickel.

It is found in the cytoplasm. Facilitates the functional incorporation of the urease nickel metallocenter. This process requires GTP hydrolysis, probably effectuated by UreG. The protein is Urease accessory protein UreG of Corynebacterium glutamicum (strain ATCC 13032 / DSM 20300 / JCM 1318 / BCRC 11384 / CCUG 27702 / LMG 3730 / NBRC 12168 / NCIMB 10025 / NRRL B-2784 / 534).